A 107-amino-acid polypeptide reads, in one-letter code: UPF0060 membrane protein RPD_3084 (107 aa).

4 consecutive transmembrane segments (helical) span residues I5 to L25, V31 to V51, A59 to E79, and R85 to P105.

This sequence belongs to the UPF0060 family.

It is found in the cell inner membrane. The polypeptide is UPF0060 membrane protein RPD_3084 (Rhodopseudomonas palustris (strain BisB5)).